A 309-amino-acid polypeptide reads, in one-letter code: Dicarboxylate carrier UCP2 (309 aa).

The Mitochondrial intermembrane portion of the chain corresponds to 1 to 16; the sequence is MVGFKATDVPPTATVK. 3 Solcar repeats span residues 11 to 106, 114 to 203, and 212 to 297; these read PTAT…VKQF, AGIG…IKDT, and DDLP…LKRA. The interval 16–63 is important for interaction with long-chain fatty acids; the sequence is KFLGAGTAACIADLITFPLDTAKVRLQIQGESQGLARTAASAQYRGVL. Residues 17 to 40 traverse the membrane as a helical segment; the sequence is FLGAGTAACIADLITFPLDTAKVR. The Mitochondrial matrix portion of the chain corresponds to 41-77; the sequence is LQIQGESQGLARTAASAQYRGVLGTILTMVRTEGPRS. A helical transmembrane segment spans residues 78 to 103; that stretch reads LYNGLVAGLQRQMSFASVRIGLYDSV. Topologically, residues 104–119 are mitochondrial intermembrane; it reads KQFYTKGSEHAGIGSR. Residues 120–145 traverse the membrane as a helical segment; sequence LLAGSTTGALAVAVAQPTDVVKVRFQ. Residues 146-173 lie on the Mitochondrial matrix side of the membrane; it reads AQARAGGGRRYQSTVEAYKTIAREEGIR. A helical transmembrane segment spans residues 174 to 199; the sequence is GLWKGTSPNVARNAIVNCTELVTYDL. Residues 200–217 are Mitochondrial intermembrane-facing; the sequence is IKDTLLKANLMTDDLPCH. A helical transmembrane segment spans residues 218–242; it reads FTSAFGAGFCTTVIASPVDVVKTRY. The Mitochondrial matrix segment spans residues 243–268; the sequence is MNSALGQYHSAGHCALTMLRKEGPRA. Residues 269–294 form a helical membrane-spanning segment; it reads FYKGFMPSFLRLGSWNVVMFVTYEQL. The tract at residues 278–285 is important for interaction with long-chain fatty acids; it reads LRLGSWNV. Residues 295 to 309 lie on the Mitochondrial intermembrane side of the membrane; the sequence is KRALMAAYESREAPF.

Belongs to the mitochondrial carrier (TC 2.A.29) family. In terms of assembly, homotetramer. Adopts an asymmetrical dimer of dimers functional form. Interacts with MICU1 (when methylated); leading to decrease the calcium sensitivity of MICU1. In terms of tissue distribution, expressed in a variety of organs, with predominant expression in the heart, lung and spleen.

It localises to the mitochondrion inner membrane. The catalysed reaction is L-aspartate(out) + phosphate(in) + H(+)(in) = L-aspartate(in) + phosphate(out) + H(+)(out). It catalyses the reaction oxaloacetate(out) + phosphate(in) + H(+)(in) = oxaloacetate(in) + phosphate(out) + H(+)(out). It carries out the reaction (S)-malate(out) + phosphate(in) + H(+)(in) = (S)-malate(in) + phosphate(out) + H(+)(out). The enzyme catalyses malonate(out) + phosphate(in) + H(+)(in) = malonate(in) + phosphate(out) + H(+)(out). The catalysed reaction is sulfate(out) + phosphate(in) + H(+)(in) = sulfate(in) + phosphate(out) + H(+)(out). It catalyses the reaction (S)-malate(out) = (S)-malate(in). It carries out the reaction L-aspartate(out) = L-aspartate(in). The enzyme catalyses phosphate(in) = phosphate(out). The catalysed reaction is chloride(in) = chloride(out). It catalyses the reaction H(+)(in) = H(+)(out). It carries out the reaction a long-chain fatty acid(out) = a long-chain fatty acid(in). In terms of biological role, antiporter that exports dicarboxylate intermediates of the Krebs cycle in exchange for phosphate plus a proton across the inner membrane of mitochondria, a process driven by mitochondrial motive force with an overall impact on glycolysis, glutaminolysis and glutathione-dependent redox balance. Continuous export of oxaloacetate and related four-carbon dicarboxylates from mitochondrial matrix into the cytosol negatively regulates the oxidation of acetyl-CoA substrates via the Krebs cycle lowering the ATP/ADP ratio and reactive oxygen species (ROS) production. May mediate inducible proton entry into the mitochondrial matrix affecting ATP turnover as a protection mechanism against oxidative stress. The proton currents are most likely associated with fatty acid flipping across the inner membrane of mitochondria in a metabolic process regulated by free fatty acids and purine nucleotides. Regulates the use of glucose as a source of energy. Required for glucose-induced DRP1-dependent mitochondrial fission and neuron activation in the ventromedial nucleus of the hypothalamus (VMH). This mitochondrial adaptation mechanism modulates the VMH pool of glucose-excited neurons with an impact on systemic glucose homeostasis. Regulates ROS levels and metabolic reprogramming of macrophages during the resolution phase of inflammation. Attenuates ROS production in response to IL33 to preserve the integrity of the Krebs cycle required for persistent production of itaconate and subsequent GATA3-dependent differentiation of inflammation-resolving alternatively activated macrophages. Can unidirectionally transport anions including L-malate, L-aspartate, phosphate and chloride ions. Does not mediate adaptive thermogenesis. This is Dicarboxylate carrier UCP2 (Ucp2) from Rattus norvegicus (Rat).